A 402-amino-acid polypeptide reads, in one-letter code: Bacteriochlorophyllide c C-7(1)-hydroxylase (402 aa).

One can recognise a Radical SAM core domain in the interval 104–359; it reads VIGMNQDIIN…IKYQDRFDMP (256 aa). Residues C120, C129, and C132 each coordinate [4Fe-4S] cluster.

This sequence belongs to the radical SAM superfamily. It depends on [4Fe-4S] cluster as a cofactor.

The catalysed reaction is a bacteriochlorophyllide c + 2 S-adenosyl-L-methionine + H2O = a bacteriochlorophyllide e + 2 5'-deoxyadenosine + 2 L-methionine + 2 H(+). It carries out the reaction a bacteriochlorophyllide d + 2 S-adenosyl-L-methionine + H2O = a bacteriochlorophyllide f + 2 5'-deoxyadenosine + 2 L-methionine + 2 H(+). It participates in porphyrin-containing compound metabolism; bacteriochlorophyll biosynthesis. Involved in the biosynthesis of bacteriochlorophyll e (BChl e). Catalyzes two consecutive hydroxylation reactions of the C-7 methyl group of bacteriochlorophyllide c (BChlide c) to form a geminal diol intermediate that spontaneously dehydrates to produce the formyl group of bacteriochlorophyllide e (BChlide e). Also able to catalyze the same reaction for bacteriochlorophyllide d (BChlide d) to give rise to bacteriochlorophyllide f (BChlide f). The protein is Bacteriochlorophyllide c C-7(1)-hydroxylase of Chlorobaculum limnaeum.